The chain runs to 404 residues: Pyruvate-flavodoxin oxidoreductase (404 aa).

It belongs to the pyruvate:ferredoxin/flavodoxin oxidoreductase family.

The catalysed reaction is oxidized [flavodoxin] + pyruvate + CoA + 2 H(+) = reduced [flavodoxin] + acetyl-CoA + CO2. Oxidoreductase required for the transfer of electrons from pyruvate to flavodoxin, which reduces nitrogenase. The polypeptide is Pyruvate-flavodoxin oxidoreductase (nifJ) (Nostoc sp. (strain ATCC 29151 / PCC 7119) (Anabaena sp.)).